A 204-amino-acid polypeptide reads, in one-letter code: Large ribosomal subunit protein eL15y (204 aa).

Residues 162–204 are disordered; the sequence is RGLTSEGKKNRGLRGKGHNNHKNRPSRRATWKKNNSISLRRYR. The segment covering 171–192 has biased composition (basic residues); the sequence is NRGLRGKGHNNHKNRPSRRATW. Residues 193 to 204 are compositionally biased toward polar residues; sequence KKNNSISLRRYR.

It belongs to the eukaryotic ribosomal protein eL15 family.

The protein is Large ribosomal subunit protein eL15y (RPL15B) of Arabidopsis thaliana (Mouse-ear cress).